The chain runs to 993 residues: Type II inositol 1,4,5-trisphosphate 5-phosphatase (993 aa).

One can recognise a PH domain in the interval 22 to 148 (QGVLCKGDSR…PEFEWLSRHT (127 aa)). Composition is skewed to basic and acidic residues over residues 149 to 163 (CAEP…REWN) and 294 to 303 (SKSDMSEKVR). Disordered regions lie at residues 149–191 (CAEP…GLED) and 236–304 (EALE…KVRS). Residues 342–668 (IQNFRFFVGT…LDKMENANIP (327 aa)) are 5-phosphatase. N355 and E383 together coordinate Mg(2+). Substrate contacts are provided by residues E383, 459-460 (NK), 582-583 (YK), and 596-598 (KCR). An ASH region spans residues 669 to 782 (SVTLSKREFC…LSVSGNYLPS (114 aa)). Residues 821 to 993 (SQLENPMEIP…FIHQFLCGPL (173 aa)) form the Rho-GAP domain. C990 is modified (cysteine methyl ester). The S-farnesyl cysteine moiety is linked to residue C990. A propeptide spans 991–993 (GPL) (removed in mature form).

This sequence belongs to the inositol 1,4,5-trisphosphate 5-phosphatase type II family. In terms of assembly, interacts with APPL1, PHETA1 and PHETA2. Interacts with several Rab GTPases, at least RAB1A, RAB2A, RAB5A, RAB6A, RAB8A, RAB9A and RAB33B; these interactions may play a dual role in targeting INPP5B to the specific membranes and stimulating its phosphatase activity. Interacts preferentially with non-phosphorylated RAB8A; phosphorylation of RAB8A on 'Thr-72' disrupts this interaction. Interacts with INPP5F. In terms of processing, isoprenylation at Cys-990 may be required for localization at the membrane. Post-translationally, may be proteolytically cleaved after Lys-320 as inferred from N-terminal protein sequence of the 75 kda form. In terms of tissue distribution, detected in kidney, liver, brain, lung and testis (at protein level). Detected in kidney and liver, and at lower levels in brain, lung and testis.

Its subcellular location is the cytoplasm. It localises to the cytosol. The protein resides in the endoplasmic reticulum-Golgi intermediate compartment. The protein localises to the early endosome membrane. It is found in the membrane. Its subcellular location is the cytoplasmic vesicle. It localises to the phagosome membrane. It catalyses the reaction a 1,2-diacyl-sn-glycero-3-phospho-(1D-myo-inositol-4,5-bisphosphate) + H2O = a 1,2-diacyl-sn-glycero-3-phospho-(1D-myo-inositol 4-phosphate) + phosphate. Hydrolyzes phosphatidylinositol 4,5-bisphosphate (PtIns(4,5)P2) and the signaling molecule phosphatidylinositol 1,4,5-trisphosphate (PtIns(1,4,5)P3), and thereby modulates cellular signaling events. This chain is Type II inositol 1,4,5-trisphosphate 5-phosphatase (Inpp5b), found in Mus musculus (Mouse).